Reading from the N-terminus, the 547-residue chain is Phosphatidylinositol/phosphatidylcholine transfer protein SFH7 (547 aa).

The CRAL-TRIO domain maps to 130–304 (EIDQVLKHYP…FFGGLCTCAD (175 aa)). The stretch at 464 to 526 (SSEYVIMVKR…KKALDETMVN (63 aa)) forms a coiled coil.

The protein belongs to the SFH family.

It is found in the golgi apparatus membrane. The protein localises to the cell membrane. Its function is as follows. Required for transport of secretory proteins from the Golgi complex. Catalyzes the transfer of phosphatidylinositol and phosphatidylcholine between membranes in vitro. The chain is Phosphatidylinositol/phosphatidylcholine transfer protein SFH7 (SFH7) from Arabidopsis thaliana (Mouse-ear cress).